Consider the following 440-residue polypeptide: Trigger factor (440 aa).

The PPIase FKBP-type domain occupies 176-261 (GDKVVIDYQN…VKSIYVVKDV (86 aa)).

This sequence belongs to the FKBP-type PPIase family. Tig subfamily.

The protein localises to the cytoplasm. The enzyme catalyses [protein]-peptidylproline (omega=180) = [protein]-peptidylproline (omega=0). Functionally, involved in protein export. Acts as a chaperone by maintaining the newly synthesized protein in an open conformation. Functions as a peptidyl-prolyl cis-trans isomerase. The sequence is that of Trigger factor from Ehrlichia canis (strain Jake).